Reading from the N-terminus, the 119-residue chain is Hisactophilin-3 (119 aa).

Residue G2 is the site of N-myristoyl glycine attachment. The tract at residues 8-110 (SHHGHFLSAE…SIYTTHHHHH (103 aa)) is contains several HHXH repeats. A run of 2 repeats spans residues 34–47 (FHVENHGHHKVAIR) and 75–87 (FHLEHHGGKVSIK). The 2 X 13 AA approximate repeats stretch occupies residues 34-87 (FHVENHGHHKVAIRTHANKYVSINDNNDVYISHHFHGEHSLFHLEHHGGKVSIK).

It belongs to the hisactophilin family. Post-translationally, phosphorylated.

Its subcellular location is the cytoplasm. The protein resides in the cell membrane. Its function is as follows. May act as an intracellular pH sensor that links chemotactic signals to responses in the microfilament system of the cells by nucleating actin polymerization or stabilizing the filaments. The chain is Hisactophilin-3 (hatC) from Dictyostelium discoideum (Social amoeba).